The sequence spans 663 residues: UvrABC system protein B (663 aa).

Residues 26–414 (DGLESGLAKQ…DNVAEQVVRP (389 aa)) enclose the Helicase ATP-binding domain. An ATP-binding site is contributed by 39–46 (GVTGSGKT). The short motif at 92–115 (YYDYYQPEAYVPASDTFIEKDASI) is the Beta-hairpin element. The region spanning 430-596 (QVDDLMSEIR…GINKSVEDIL (167 aa)) is the Helicase C-terminal domain. In terms of domain architecture, UVR spans 624–659 (VKQINALEKQMYSHAQNMEFELAAKIRDEYLLLKEQ).

The protein belongs to the UvrB family. Forms a heterotetramer with UvrA during the search for lesions. Interacts with UvrC in an incision complex.

It is found in the cytoplasm. The UvrABC repair system catalyzes the recognition and processing of DNA lesions. A damage recognition complex composed of 2 UvrA and 2 UvrB subunits scans DNA for abnormalities. Upon binding of the UvrA(2)B(2) complex to a putative damaged site, the DNA wraps around one UvrB monomer. DNA wrap is dependent on ATP binding by UvrB and probably causes local melting of the DNA helix, facilitating insertion of UvrB beta-hairpin between the DNA strands. Then UvrB probes one DNA strand for the presence of a lesion. If a lesion is found the UvrA subunits dissociate and the UvrB-DNA preincision complex is formed. This complex is subsequently bound by UvrC and the second UvrB is released. If no lesion is found, the DNA wraps around the other UvrB subunit that will check the other stand for damage. The protein is UvrABC system protein B of Legionella pneumophila subsp. pneumophila (strain Philadelphia 1 / ATCC 33152 / DSM 7513).